The following is a 94-amino-acid chain: Co-chaperonin GroES (94 aa).

It belongs to the GroES chaperonin family. In terms of assembly, heptamer of 7 subunits arranged in a ring. Interacts with the chaperonin GroEL.

The protein localises to the cytoplasm. Its function is as follows. Together with the chaperonin GroEL, plays an essential role in assisting protein folding. The GroEL-GroES system forms a nano-cage that allows encapsulation of the non-native substrate proteins and provides a physical environment optimized to promote and accelerate protein folding. GroES binds to the apical surface of the GroEL ring, thereby capping the opening of the GroEL channel. In Ruminiclostridium cellulolyticum (strain ATCC 35319 / DSM 5812 / JCM 6584 / H10) (Clostridium cellulolyticum), this protein is Co-chaperonin GroES.